Consider the following 251-residue polypeptide: Triosephosphate isomerase (251 aa).

9-11 (NWK) contributes to the substrate binding site. His96 (electrophile) is an active-site residue. The active-site Proton acceptor is the Glu166. Substrate-binding positions include Gly172, Ser212, and 233 to 234 (GG).

It belongs to the triosephosphate isomerase family. As to quaternary structure, homodimer.

It localises to the cytoplasm. It catalyses the reaction D-glyceraldehyde 3-phosphate = dihydroxyacetone phosphate. Its pathway is carbohydrate biosynthesis; gluconeogenesis. It participates in carbohydrate degradation; glycolysis; D-glyceraldehyde 3-phosphate from glycerone phosphate: step 1/1. Its function is as follows. Involved in the gluconeogenesis. Catalyzes stereospecifically the conversion of dihydroxyacetone phosphate (DHAP) to D-glyceraldehyde-3-phosphate (G3P). The polypeptide is Triosephosphate isomerase (Pelodictyon phaeoclathratiforme (strain DSM 5477 / BU-1)).